The primary structure comprises 283 residues: 4-diphosphocytidyl-2-C-methyl-D-erythritol kinase (283 aa).

K10 is an active-site residue. 99-109 (PMGGGLGGGSS) provides a ligand contact to ATP. D141 is a catalytic residue.

The protein belongs to the GHMP kinase family. IspE subfamily. In terms of assembly, homodimer.

The catalysed reaction is 4-CDP-2-C-methyl-D-erythritol + ATP = 4-CDP-2-C-methyl-D-erythritol 2-phosphate + ADP + H(+). Its pathway is isoprenoid biosynthesis; isopentenyl diphosphate biosynthesis via DXP pathway; isopentenyl diphosphate from 1-deoxy-D-xylulose 5-phosphate: step 3/6. Catalyzes the phosphorylation of the position 2 hydroxy group of 4-diphosphocytidyl-2C-methyl-D-erythritol. The sequence is that of 4-diphosphocytidyl-2-C-methyl-D-erythritol kinase from Escherichia coli O127:H6 (strain E2348/69 / EPEC).